The following is a 192-amino-acid chain: Cysteine and glycine-rich protein 1 (192 aa).

In terms of domain architecture, LIM zinc-binding 1 spans 10–61 (CGVCQKAVYFAEEVQCEGSSFHKSCFLCMVCKKNLDSTTVAVHGDEIYCKSC). Positions 64–69 (KKYGPK) match the Nuclear localization signal motif. The LIM zinc-binding 2 domain occupies 118–169 (CPRCGQAVYAAEKVIGAGKSWHKSCFRCAKCGKSLESTTLADKDGEIYCKGC).

In terms of assembly, probable monomer. Interacts with ZYX. In terms of tissue distribution, most prominent in tissues that are enriched in smooth muscle cells, such as gizzard, stomach, and intestine. Lower level in the heart, no expression in liver, skeletal muscle, or brain.

It is found in the nucleus. The protein localises to the cytoplasm. The protein resides in the cytoskeleton. In terms of biological role, heat stable protein, that interacts with zyxin/ZYX. May be a component of a signal transduction pathway that mediates adhesion-stimulated changes in gene expression. In Gallus gallus (Chicken), this protein is Cysteine and glycine-rich protein 1 (CSRP1).